A 1010-amino-acid chain; its full sequence is Contactin-1 (1010 aa).

The signal sequence occupies residues 1 to 19 (MRFFISHLVTLCFIFCVAD). 6 consecutive Ig-like C2-type domains span residues 33-123 (PVFE…ATLS), 132-215 (PEEH…KSVF), 232-317 (PADI…ARVY), 322-398 (PEWV…AELK), 404-491 (PTFE…GVLE), and 496-592 (TRIT…LVVR). Disulfide bonds link Cys-57-Cys-106 and Cys-150-Cys-203. N-linked (GlcNAc...) asparagine glycosylation is found at Asn-200 and Asn-249. An intrachain disulfide couples Cys-254 to Cys-301. N-linked (GlcNAc...) asparagine glycosylation is present at Asn-329. 2 disulfides stabilise this stretch: Cys-343–Cys-382 and Cys-427–Cys-475. 4 N-linked (GlcNAc...) asparagine glycosylation sites follow: Asn-448, Asn-464, Asn-485, and Asn-512. Cys-517 and Cys-574 are joined by a disulfide. Residue Asn-582 is glycosylated (N-linked (GlcNAc...) asparagine). Fibronectin type-III domains lie at 597-695 (PPGG…TEGA), 700-797 (APSD…SAQD), 802-897 (VPTD…APPS), and 899-990 (RPRI…TAGV). Residues 679 to 689 (GTGEPSMPSQR) show a composition bias toward polar residues. The segment at 679 to 708 (GTGEPSMPSQRIRTEGAPPNVAPSDVGGGG) is disordered. Asn-924 carries an N-linked (GlcNAc...) asparagine glycan. Ser-984 carries the GPI-anchor amidated serine lipid modification. Residues 985–1010 (GATAGVPTLLLGLVLPALGVLAYSGF) constitute a propeptide, removed in mature form.

Belongs to the immunoglobulin superfamily. Contactin family. In terms of assembly, interacts with TNR.

It is found in the cell membrane. In terms of biological role, mediates cell surface interactions during nervous system development. Interaction with TNR enhances the neurite outgrowth. In Gallus gallus (Chicken), this protein is Contactin-1 (CNTN1).